We begin with the raw amino-acid sequence, 907 residues long: HMG box transcription factor BBX (907 aa).

Over residues 1 to 19 (MKGSNRNKDHSTEGEGDGK) the composition is skewed to basic and acidic residues. Disordered regions lie at residues 1–24 (MKGS…PKRK), 37–80 (LDFS…EQRA), 152–185 (TTNK…PTPK), and 220–242 (TPEA…RQKS). 2 stretches are compositionally biased toward acidic residues: residues 39-52 (FSEE…EEDI) and 61-75 (DGLE…DDES). Positions 80–148 (ARRPMNAFLL…AFMKANPGYR (69 aa)) form a DNA-binding region, HMG box. Residues 152–164 (TTNKPVKSPTPTV) are compositionally biased toward polar residues. Serine 242 is modified (phosphoserine). Residue lysine 384 forms a Glycyl lysine isopeptide (Lys-Gly) (interchain with G-Cter in SUMO2) linkage. 3 disordered regions span residues 435–483 (IIED…DIES), 495–612 (DWGV…SERS), and 628–672 (TSLR…KKFK). Residues 447 to 457 (KIKKKKKKNKL) show a composition bias toward basic residues. A phosphoserine mark is found at serine 476 and serine 483. 2 stretches are compositionally biased toward basic and acidic residues: residues 496 to 506 (WGVDKLGETPR) and 534 to 550 (KKVS…ESRP). Lysine 571 is covalently cross-linked (Glycyl lysine isopeptide (Lys-Gly) (interchain with G-Cter in SUMO2)). Over residues 591-612 (KPEDSDCHRKTETCGSRKSERS) the composition is skewed to basic and acidic residues. Polar residues predominate over residues 656-668 (ESWTFNQSGTSGS). A Glycyl lysine isopeptide (Lys-Gly) (interchain with G-Cter in SUMO2) cross-link involves residue lysine 693. The residue at position 701 (serine 701) is a Phosphoserine. 3 disordered regions span residues 708–736 (KCVS…SGDK), 769–854 (NALS…SSTP), and 877–907 (VHRG…CADQ). Residues 723–732 (SSESTKTSKG) show a composition bias toward low complexity. Residues 772–783 (SIPNTPEPTTMQ) are compositionally biased toward polar residues. Serine 789 bears the Phosphoserine mark. A compositionally biased stretch (basic residues) spans 790–801 (QKRKARKTKITH). Position 811 is a phosphoserine (serine 811).

It is found in the nucleus. Functionally, transcription factor that is necessary for cell cycle progression from G1 to S phase. This is HMG box transcription factor BBX (Bbx) from Mus musculus (Mouse).